The primary structure comprises 162 residues: Peptide deformylase (162 aa).

Positions 86 and 128 each coordinate Fe cation. Glutamate 129 is an active-site residue. Residue histidine 132 participates in Fe cation binding.

The protein belongs to the polypeptide deformylase family. Fe(2+) is required as a cofactor.

It catalyses the reaction N-terminal N-formyl-L-methionyl-[peptide] + H2O = N-terminal L-methionyl-[peptide] + formate. Functionally, removes the formyl group from the N-terminal Met of newly synthesized proteins. Requires at least a dipeptide for an efficient rate of reaction. N-terminal L-methionine is a prerequisite for activity but the enzyme has broad specificity at other positions. This is Peptide deformylase from Treponema pallidum (strain Nichols).